A 1444-amino-acid polypeptide reads, in one-letter code: ABC transporter G family member 39 (1444 aa).

The disordered stretch occupies residues 1-36 (MDIVRMGSVASGGGSVRRTASSWRGTSGRSDAFGRS). Residues 19–29 (TASSWRGTSGR) are compositionally biased toward polar residues. Positions 154 to 426 (LSAMRIVSSG…FEAMGFKCPE (273 aa)) constitute an ABC transporter 1 domain. 187–194 (GPPGSGKT) is an ATP binding site. Residues 504-717 (ELTKACFSRE…AQNAIAVNEF (214 aa)) form the ABC transmembrane type-2 1 domain. A run of 6 helical transmembrane segments spans residues 522–542 (FVYI…MTVF), 555–575 (GAIF…NGFA), 610–630 (IPIS…VMGF), 642–662 (VLLV…AALG), 667–687 (VADT…GFLI), and 754–774 (IGVG…ILFL). The ABC transporter 2 domain occupies 846-1098 (ITFDNIRYSV…HLINYFEGIQ (253 aa)). ATP is bound at residue 891 to 898 (GVSGAGKT). The ABC transmembrane type-2 2 domain maps to 1171 to 1385 (TQCMACLWKQ…TLYGLVASQY (215 aa)). 7 helical membrane-spanning segments follow: residues 1192–1212 (ATRI…FLNL), 1220–1240 (LDLF…GIQN), 1278–1298 (IPHI…LIGF), 1305–1325 (FFWY…YGMM), 1335–1355 (IAAI…GFLI), 1362–1382 (IWWR…GLVA), and 1414–1434 (LGYV…VFAF).

This sequence belongs to the ABC transporter superfamily. ABCG family. PDR (TC 3.A.1.205) subfamily.

The protein resides in the membrane. In terms of biological role, may be a general defense protein. The chain is ABC transporter G family member 39 from Oryza sativa subsp. japonica (Rice).